A 193-amino-acid polypeptide reads, in one-letter code: N-(5'-phosphoribosyl)anthranilate isomerase (193 aa).

This sequence belongs to the TrpF family.

The enzyme catalyses N-(5-phospho-beta-D-ribosyl)anthranilate = 1-(2-carboxyphenylamino)-1-deoxy-D-ribulose 5-phosphate. It participates in amino-acid biosynthesis; L-tryptophan biosynthesis; L-tryptophan from chorismate: step 3/5. This is N-(5'-phosphoribosyl)anthranilate isomerase from Streptococcus mutans serotype c (strain ATCC 700610 / UA159).